Here is a 138-residue protein sequence, read N- to C-terminus: Large ribosomal subunit protein uL16 (138 aa).

Over residues 1–16 (MLIPRRVKHRKQHHPS) the composition is skewed to basic residues. The disordered stretch occupies residues 1-25 (MLIPRRVKHRKQHHPSRSGAAKGGT).

It belongs to the universal ribosomal protein uL16 family. Part of the 50S ribosomal subunit.

In terms of biological role, binds 23S rRNA and is also seen to make contacts with the A and possibly P site tRNAs. In Rhodococcus jostii (strain RHA1), this protein is Large ribosomal subunit protein uL16.